The primary structure comprises 633 residues: MADQRMDISSTISDFMSPDPADLISSSLSTSGMDCNRKRKGSSTDYQLDGFPFEEGMDTDKDDQHGRLEYTDQQGRIKNAREAHSQIEKRRRDKMNSFIDELASLVPTCNAMSRKLDKLTVLRMAVQHMKTLRGATNPYTEANYKPAFLSDDELKHLILRAADGFLFVVGCDRGKILFVSESVFKILNYSQNDLIGQSLFDYLHPKDIAKVKEQLSSSDTAPRERLIDAKTGLPVKTDITPGPSRLCSGARRSFFCRMKCNRPSVKVEDKDFPSTCSKKKADRKSFCTIHSTGYLKSWPPTKMGLDEDNEPDNEGCNLSCLVAIGRLHPHVVPQPVNGEIRVKPTEYVSRHAIDGKFVFVDQRATAILAYLPQELLGTSCYEYFHQDDIGHLAECHRQVLQTREKITTNCYKFKIKDGSFITLRSRWFSFMNPWTKEVEYIVSTNTVVSTNVLDSGDAAFPQLAASPHSMDSVLQAGEGGPKRTHPTVPGIPGGTRAGAGKIGRMIAEEIMEIHRIRGSSPSSCGSSPLNITSTPPPDTSSPGGKKILNGGTPDISSAGLLSGQIQDNSGYPYSDNSSILGENSHIGIDMIDNDQGSSSPSNDEAAMAVIMSLLEADAGLGGPVDFSDLPWPL.

The interval 1 to 65 (MADQRMDISS…GMDTDKDDQH (65 aa)) is disordered. The residue at position 17 (S17) is a Phosphoserine; by GSK3-beta. Residues 24 to 33 (ISSSLSTSGM) are compositionally biased toward polar residues. Positions 36-41 (NRKRKG) match the Nuclear localization signal motif. Positions 79–132 (NAREAHSQIEKRRRDKMNSFIDELASLVPTCNAMSRKLDKLTVLRMAVQHMKTL) constitute a bHLH domain. S85 is subject to Phosphoserine. S97 bears the Phosphoserine; by CK2 mark. The Nuclear export signal 1 motif lies at 149–159 (LSDDELKHLIL). Residues 150-222 (SDDELKHLIL…EQLSSSDTAP (73 aa)) form the PAS 1 domain. K259 participates in a covalent cross-link: Glycyl lysine isopeptide (Lys-Gly) (interchain with G-Cter in SUMO2 and SUMO3). K266 participates in a covalent cross-link: Glycyl lysine isopeptide (Lys-Gly) (interchain with G-Cter in SUMO). The region spanning 333 to 403 (PQPVNGEIRV…ECHRQVLQTR (71 aa)) is the PAS 2 domain. The Nuclear export signal 2 signature appears at 368 to 376 (LAYLPQELL). The PAC domain occupies 408-451 (TNCYKFKIKDGSFITLRSRWFSFMNPWTKEVEYIVSTNTVVSTN). 2 disordered regions span residues 472-499 (SVLQ…RAGA) and 518-555 (GSSP…TPDI). Over residues 518 to 528 (GSSPSSCGSSP) the composition is skewed to low complexity. An N6-acetyllysine modification is found at K545.

Component of the circadian clock oscillator which includes the CRY1/2 proteins, CLOCK or NPAS2, BMAL1 or BMAL2, CSNK1D and/or CSNK1E, TIMELESS and the PER1/2/3 proteins. Forms a heterodimer with CLOCK. The CLOCK-BMAL1 heterodimer is required for E-box-dependent transactivation, for CLOCK nuclear translocation and degradation, and, for phosphorylation of both CLOCK and BMAL1. Interacts with PER1, PER2, CRY1 and CRY2 and this interaction requires a translocation to the nucleus. Interaction of the CLOCK-BMAL1 heterodimer with PER or CRY inhibits transcription activation. Post-translationally, ubiquitinated, leading to its proteasomal degradation. Deubiquitinated by USP9X. O-glycosylated; contains O-GlcNAc. O-glycosylation by OGT prevents protein degradation by inhibiting ubiquitination. It also stabilizes the CLOCK-BMAL1 heterodimer thereby increasing CLOCK-BMAL1-mediated transcription of genes in the negative loop of the circadian clock such as PER1/2/3 and CRY1/2. In terms of processing, acetylated on Lys-545 by CLOCK during the repression phase of the circadian cycle. Acetylation facilitates recruitment of CRY1 protein and initiates the repression phase of the circadian cycle. Acetylated at Lys-545 by KAT5 during the activation phase of the cycle, leading to recruitment of the positive transcription elongation factor b (P-TEFb) and BRD4, followed by productive elongation of circadian transcripts. Deacetylated by SIRT1, which may result in decreased protein stability. Post-translationally, phosphorylated upon dimerization with CLOCK. Phosphorylation enhances the transcriptional activity, alters the subcellular localization and decreases the stability of the CLOCK-BMAL1 heterodimer by promoting its degradation. Phosphorylation shows circadian variations in the liver with a peak between CT10 to CT14. Phosphorylation at Ser-97 by CK2 is essential for its nuclear localization, its interaction with CLOCK and controls CLOCK nuclear entry. Dephosphorylation at Ser-85 is important for dimerization with CLOCK and transcriptional activity. Sumoylated on Lys-266 upon dimerization with CLOCK. Predominantly conjugated to poly-SUMO2/3 rather than SUMO1 and the level of these conjugates undergo rhythmic variation, peaking at CT9-CT12. Sumoylation localizes it exclusively to the PML body and promotes its ubiquitination in the PML body, ubiquitin-dependent proteasomal degradation and the transcriptional activity of the CLOCK-BMAL1 heterodimer. In terms of processing, undergoes lysosome-mediated degradation in a time-dependent manner in the liver.

It localises to the nucleus. Its subcellular location is the cytoplasm. It is found in the PML body. Functionally, transcriptional activator which forms a core component of the circadian clock. The circadian clock, an internal time-keeping system, regulates various physiological processes through the generation of approximately 24 hour circadian rhythms in gene expression, which are translated into rhythms in metabolism and behavior. It is derived from the Latin roots 'circa' (about) and 'diem' (day) and acts as an important regulator of a wide array of physiological functions including metabolism, sleep, body temperature, blood pressure, endocrine, immune, cardiovascular, and renal function. Consists of two major components: the central clock, residing in the suprachiasmatic nucleus (SCN) of the brain, and the peripheral clocks that are present in nearly every tissue and organ system. Both the central and peripheral clocks can be reset by environmental cues, also known as Zeitgebers (German for 'timegivers'). The predominant Zeitgeber for the central clock is light, which is sensed by retina and signals directly to the SCN. The central clock entrains the peripheral clocks through neuronal and hormonal signals, body temperature and feeding-related cues, aligning all clocks with the external light/dark cycle. Circadian rhythms allow an organism to achieve temporal homeostasis with its environment at the molecular level by regulating gene expression to create a peak of protein expression once every 24 hours to control when a particular physiological process is most active with respect to the solar day. Transcription and translation of core clock components (CLOCK, NPAS2, BMAL1, BMAL2, PER1, PER2, PER3, CRY1 and CRY2) plays a critical role in rhythm generation, whereas delays imposed by post-translational modifications (PTMs) are important for determining the period (tau) of the rhythms (tau refers to the period of a rhythm and is the length, in time, of one complete cycle). A diurnal rhythm is synchronized with the day/night cycle, while the ultradian and infradian rhythms have a period shorter and longer than 24 hours, respectively. Disruptions in the circadian rhythms contribute to the pathology of cardiovascular diseases, cancer, metabolic syndromes and aging. A transcription/translation feedback loop (TTFL) forms the core of the molecular circadian clock mechanism. Transcription factors, CLOCK or NPAS2 and BMAL1 or BMAL2, form the positive limb of the feedback loop, act in the form of a heterodimer and activate the transcription of core clock genes and clock-controlled genes (involved in key metabolic processes), harboring E-box elements (5'-CACGTG-3') within their promoters. The core clock genes: PER1/2/3 and CRY1/2 which are transcriptional repressors form the negative limb of the feedback loop and interact with the CLOCK|NPAS2-BMAL1|BMAL2 heterodimer inhibiting its activity and thereby negatively regulating their own expression. This heterodimer also activates nuclear receptors NR1D1/2 and RORA/B/G, which form a second feedback loop and which activate and repress BMAL1 transcription, respectively. The preferred binding motif for the CLOCK-BMAL1 heterodimer is 5'-CACGTGA-3', which contains a flanking adenine nucleotide at the 3-prime end of the canonical 6-nucleotide E-box sequence. CLOCK specifically binds to the half-site 5'-CAC-3', while BMAL1 binds to the half-site 5'-GTGA-3'. Essential for the rhythmic interaction of CLOCK with ASS1 and plays a critical role in positively regulating CLOCK-mediated acetylation of ASS1. Plays a role in protecting against lethal sepsis by limiting the expression of immune checkpoint protein CD274 in macrophages in a PKM2-dependent manner. The protein is Basic helix-loop-helix ARNT-like protein 1 (BMAL1) of Tyto alba (Barn owl).